Here is a 60-residue protein sequence, read N- to C-terminus: UPF0434 protein ESA_02427 (60 aa).

This sequence belongs to the UPF0434 family.

The sequence is that of UPF0434 protein ESA_02427 from Cronobacter sakazakii (strain ATCC BAA-894) (Enterobacter sakazakii).